Reading from the N-terminus, the 480-residue chain is MKLDAPFNLDPNVKVRTRFAPSPTGYLHVGGARTALYSWLYAKHNNGEFVLRIEDTDLERSTPEATAAIIEGMEWLNLPWEHGPYYQTKRFDRYNQVIDEMIEQGLAYRCYCTKEHLEELRHTQEQNKEKPRYDRHCLHDHNHSPDEPHVVRFKNPTEGSVVFDDAVRGRIEISNSELDDLIIRRTDGSPTYNFCVVVDDWDMGITHVVRGEDHINNTPRQINILKAIGAPIPTYAHVSMINGDDGQKLSKRHGAVSVMQYRDDGYLPEALINYLVRLGWGHGDQEIFSREEMINYFELDHVSKSASAFNTEKLQWLNQHYIRELPPEYVAKHLEWHYKDQGIDTSNGPALTDIVSMLAERCKTLKEMARSSRYFFEEFETFDEAAAKKHFKGNAAEALTKVKEKLTALSSWDLHSTHEAIEQTAAELEVGMGKVGMPLRVAVTGSGQSPSMDVTLVGIGRDRVLARIQRAIDFIHAQNA.

The short motif at 21–31 is the 'HIGH' region element; that stretch reads PSPTGYLHVGG. Positions 110, 112, 137, and 139 each coordinate Zn(2+). Positions 248 to 252 match the 'KMSKS' region motif; it reads KLSKR. K251 contributes to the ATP binding site.

The protein belongs to the class-I aminoacyl-tRNA synthetase family. Glutamate--tRNA ligase type 1 subfamily. Monomer. Zn(2+) serves as cofactor.

It is found in the cytoplasm. It catalyses the reaction tRNA(Glu) + L-glutamate + ATP = L-glutamyl-tRNA(Glu) + AMP + diphosphate. Functionally, catalyzes the attachment of glutamate to tRNA(Glu) in a two-step reaction: glutamate is first activated by ATP to form Glu-AMP and then transferred to the acceptor end of tRNA(Glu). This chain is Glutamate--tRNA ligase, found in Haemophilus influenzae (strain PittEE).